Reading from the N-terminus, the 143-residue chain is Transcription antitermination protein NusB (143 aa).

It belongs to the NusB family.

Functionally, involved in transcription antitermination. Required for transcription of ribosomal RNA (rRNA) genes. Binds specifically to the boxA antiterminator sequence of the ribosomal RNA (rrn) operons. The chain is Transcription antitermination protein NusB from Dehalococcoides mccartyi (strain CBDB1).